Here is a 704-residue protein sequence, read N- to C-terminus: Seven transmembrane domain-containing serine/threonine-protein kinase 2 (704 aa).

Over 1-5 (MPSKE) the chain is Extracellular. A helical transmembrane segment spans residues 6 to 26 (FIIPLILLCFYSVNGFVAVIS). Topologically, residues 27–42 (SLVELFIHKASWNSIK) are cytoplasmic. A helical membrane pass occupies residues 43 to 63 (IFFYSLLILQCLCRCIIIGWG). Topologically, residues 64–76 (MIETVQGGEFYSN) are extracellular. Residues 77–97 (FPSLLFISYAGLVALQMIQFL) traverse the membrane as a helical segment. At 98-121 (PNDNQYLLLSEGKKNNHKVKVGTN) the chain is on the cytoplasmic side. The chain crosses the membrane as a helical span at residues 122–142 (ILIFFNLFMYFGMFLLFGIAE). The Extracellular portion of the chain corresponds to 143-185 (KQVGNSTSFNHHGNHNSTTSTSTDEIPLVSTEVGELYLFGDKD). N147 and N158 each carry an N-linked (GlcNAc...) asparagine glycan. The chain crosses the membrane as a helical span at residues 186–206 (PIYIVLDCFYFVCLLLLLIFH). Residues 207–224 (SYVGWKTYKRNKDLFGIK) are Cytoplasmic-facing. A helical membrane pass occupies residues 225–245 (LNVIHLILLICIFIRSLLVII). The Extracellular segment spans residues 246-265 (DPSSPNNSILHIDTESWLIY). N251 carries an N-linked (GlcNAc...) asparagine glycan. Residues 266–286 (IYTISYYVVGEIIPGMLLIVI) form a helical membrane-spanning segment. The Cytoplasmic segment spans residues 287–704 (EFLLPYHKRK…WSIEKDSSSK (418 aa)). The Protein kinase domain occupies 317 to 682 (IAIHELLGMG…SLGVKFHLAN (366 aa)). ATP-binding positions include 323 to 331 (LGMGGSGAM) and K350. Residue D506 is the Proton acceptor of the active site.

Belongs to the protein kinase superfamily. Ser/Thr protein kinase family.

It is found in the membrane. It catalyses the reaction L-seryl-[protein] + ATP = O-phospho-L-seryl-[protein] + ADP + H(+). It carries out the reaction L-threonyl-[protein] + ATP = O-phospho-L-threonyl-[protein] + ADP + H(+). The polypeptide is Seven transmembrane domain-containing serine/threonine-protein kinase 2 (7tmk2) (Dictyostelium discoideum (Social amoeba)).